The primary structure comprises 432 residues: Phosphoribosylamine--glycine ligase (432 aa).

The ATP-grasp domain occupies 110 to 316 (RNFMKDNDIE…MIDVMSAVVN (207 aa)). ATP is bound at residue 137–194 (IEELGSVAIKPAGLTGGKGVKVMGDQLPDTGAAYDYAVSLLDGDNVVVEENLVGEEFT). Mg(2+) contacts are provided by Gln274, Glu286, and Asn288. Residues Gln274, Glu286, and Asn288 each coordinate Mn(2+).

The protein belongs to the GARS family. Mg(2+) serves as cofactor. The cofactor is Mn(2+).

The catalysed reaction is 5-phospho-beta-D-ribosylamine + glycine + ATP = N(1)-(5-phospho-beta-D-ribosyl)glycinamide + ADP + phosphate + H(+). It functions in the pathway purine metabolism; IMP biosynthesis via de novo pathway; N(1)-(5-phospho-D-ribosyl)glycinamide from 5-phospho-alpha-D-ribose 1-diphosphate: step 2/2. The chain is Phosphoribosylamine--glycine ligase from Methanococcoides burtonii (strain DSM 6242 / NBRC 107633 / OCM 468 / ACE-M).